The sequence spans 305 residues: Coiled-coil domain-containing protein 83 (305 aa).

The disordered stretch occupies residues 1–25 (MDSSAKGSKKDAPDGPPKDSKLPVS). Basic and acidic residues predominate over residues 8 to 21 (SKKDAPDGPPKDSK). Residues 37 to 186 (ENAVERFMFH…LEDEKKRISR (150 aa)) adopt a coiled-coil conformation.

This is Coiled-coil domain-containing protein 83 (Ccdc83) from Mus musculus (Mouse).